Here is a 631-residue protein sequence, read N- to C-terminus: Dolichyl-diphosphooligosaccharide--protein glycosyltransferase subunit 2 (631 aa).

An N-terminal signal peptide occupies residues 1 to 22 (MAPPGSSAVFLLALTITASVQA). Residues 23–540 (LTPTHYLTKQ…REPEKRPPTV (518 aa)) are Lumenal-facing. A glycan (N-linked (GlcNAc...) asparagine) is linked at N106. A Glycyl lysine isopeptide (Lys-Gly) (interchain with G-Cter in ubiquitin) cross-link involves residue K154. The helical transmembrane segment at 541 to 561 (VSNTFTALILSPLLLLFALWI) threads the bilayer. Over 562–571 (RIGANVSNFT) the chain is Cytoplasmic. Residues 572–592 (FAPSTVIFHLGHAAMLGLMYI) form a helical membrane-spanning segment. The Lumenal portion of the chain corresponds to 593–596 (YWTQ). Residues 597-617 (LNMFQTLKYLAVLGTVTFLAG) form a helical membrane-spanning segment. Residues 618–631 (NRMLAQHAVKRTAH) lie on the Cytoplasmic side of the membrane.

This sequence belongs to the SWP1 family. In terms of assembly, component of the oligosaccharyltransferase (OST) complex. OST exists in two different complex forms which contain common core subunits RPN1, RPN2, OST48, OST4, DAD1 and TMEM258, either STT3A or STT3B as catalytic subunits, and form-specific accessory subunits. STT3A complex assembly occurs through the formation of 3 subcomplexes. Subcomplex 1 contains RPN1 and TMEM258, subcomplex 2 contains the STT3A-specific subunits STT3A, DC2/OSTC, and KCP2 as well as the core subunit OST4, and subcomplex 3 contains RPN2, DAD1, and OST48. The STT3A complex can form stable complexes with the Sec61 complex or with both the Sec61 and TRAP complexes. Interacts with DDI2. Interacts with TMEM35A/NACHO.

The protein localises to the endoplasmic reticulum. It is found in the endoplasmic reticulum membrane. The protein operates within protein modification; protein glycosylation. Subunit of the oligosaccharyl transferase (OST) complex that catalyzes the initial transfer of a defined glycan (Glc(3)Man(9)GlcNAc(2) in eukaryotes) from the lipid carrier dolichol-pyrophosphate to an asparagine residue within an Asn-X-Ser/Thr consensus motif in nascent polypeptide chains, the first step in protein N-glycosylation. N-glycosylation occurs cotranslationally and the complex associates with the Sec61 complex at the channel-forming translocon complex that mediates protein translocation across the endoplasmic reticulum (ER). All subunits are required for a maximal enzyme activity. The sequence is that of Dolichyl-diphosphooligosaccharide--protein glycosyltransferase subunit 2 from Mus musculus (Mouse).